We begin with the raw amino-acid sequence, 103 residues long: Small ribosomal subunit protein uS10 (103 aa).

This sequence belongs to the universal ribosomal protein uS10 family. Part of the 30S ribosomal subunit.

Involved in the binding of tRNA to the ribosomes. The sequence is that of Small ribosomal subunit protein uS10 from Campylobacter fetus subsp. fetus (strain 82-40).